Consider the following 278-residue polypeptide: Ribosomal RNA small subunit methyltransferase A (278 aa).

S-adenosyl-L-methionine contacts are provided by Asn27, Leu29, Gly54, Glu75, Asp95, and Asn118.

Belongs to the class I-like SAM-binding methyltransferase superfamily. rRNA adenine N(6)-methyltransferase family. RsmA subfamily.

The protein resides in the cytoplasm. It carries out the reaction adenosine(1518)/adenosine(1519) in 16S rRNA + 4 S-adenosyl-L-methionine = N(6)-dimethyladenosine(1518)/N(6)-dimethyladenosine(1519) in 16S rRNA + 4 S-adenosyl-L-homocysteine + 4 H(+). Specifically dimethylates two adjacent adenosines (A1518 and A1519) in the loop of a conserved hairpin near the 3'-end of 16S rRNA in the 30S particle. May play a critical role in biogenesis of 30S subunits. The protein is Ribosomal RNA small subunit methyltransferase A of Chlamydia abortus (strain DSM 27085 / S26/3) (Chlamydophila abortus).